The sequence spans 332 residues: Cell division protein ZipA (332 aa).

The Periplasmic portion of the chain corresponds to 1–6 (MMQDLR). A helical membrane pass occupies residues 7–27 (LILIVVGAIAIIALLLHGLWT). Residues 28–332 (SRKERSSLFR…RIRDVLKANA (305 aa)) lie on the Cytoplasmic side of the membrane. Residues 40 to 51 (PVKRAKKARDET) show a composition bias toward basic and acidic residues. A disordered region spans residues 40–189 (PVKRAKKARD…VQPAPQQPAE (150 aa)). Residues 76–88 (SFDSASVDSSSFD) are compositionally biased toward low complexity. The segment covering 93 to 105 (AREDVRSEAKSPF) has biased composition (basic and acidic residues).

The protein belongs to the ZipA family. As to quaternary structure, interacts with FtsZ via their C-terminal domains.

It localises to the cell inner membrane. In terms of biological role, essential cell division protein that stabilizes the FtsZ protofilaments by cross-linking them and that serves as a cytoplasmic membrane anchor for the Z ring. Also required for the recruitment to the septal ring of downstream cell division proteins. The protein is Cell division protein ZipA of Pectobacterium atrosepticum (strain SCRI 1043 / ATCC BAA-672) (Erwinia carotovora subsp. atroseptica).